A 330-amino-acid chain; its full sequence is Biotin synthase (330 aa).

The Radical SAM core domain maps to 53–276 (NNIRLNVLLS…VFPFKELRLS (224 aa)). Positions 68, 72, and 75 each coordinate [4Fe-4S] cluster. Cysteine 112, cysteine 144, cysteine 204, and arginine 274 together coordinate [2Fe-2S] cluster.

Belongs to the radical SAM superfamily. Biotin synthase family. In terms of assembly, homodimer. [4Fe-4S] cluster is required as a cofactor. [2Fe-2S] cluster serves as cofactor.

The catalysed reaction is (4R,5S)-dethiobiotin + (sulfur carrier)-SH + 2 reduced [2Fe-2S]-[ferredoxin] + 2 S-adenosyl-L-methionine = (sulfur carrier)-H + biotin + 2 5'-deoxyadenosine + 2 L-methionine + 2 oxidized [2Fe-2S]-[ferredoxin]. It participates in cofactor biosynthesis; biotin biosynthesis; biotin from 7,8-diaminononanoate: step 2/2. Its function is as follows. Catalyzes the conversion of dethiobiotin (DTB) to biotin by the insertion of a sulfur atom into dethiobiotin via a radical-based mechanism. This chain is Biotin synthase, found in Streptococcus agalactiae serotype V (strain ATCC BAA-611 / 2603 V/R).